A 190-amino-acid chain; its full sequence is Putative triphosphatase YjbK (190 aa).

One can recognise a CYTH domain in the interval 4 to 189 (EIEIEFKNML…LRFYEEKRKS (186 aa)).

In Bacillus subtilis (strain 168), this protein is Putative triphosphatase YjbK (yjbK).